The primary structure comprises 308 residues: Cell division protein FtsX (308 aa).

Topologically, residues 1 to 24 (MISRFFRHLFEALKSLKRNGWMTV) are cytoplasmic. Residues 25–45 (AAVSSVMITLTLVAIFASVIF) form a helical membrane-spanning segment. Topologically, residues 46-178 (NTAKLATDIE…NTERLFKLAS (133 aa)) are extracellular. A helical membrane pass occupies residues 179–199 (FIRVWGLGIAALLIFIAVFLI). Residues 200–236 (SNTIRITIISRSREIQIMRLVGAKNSYIRGPFLLEGA) lie on the Cytoplasmic side of the membrane. The chain crosses the membrane as a helical span at residues 237–257 (FIGLLGAIAPSVLVFIVYQIV). The Extracellular segment spans residues 258–276 (YQSVNKSLVGQNLSMISPD). A helical transmembrane segment spans residues 277 to 297 (LFSPLMIALLFVIGVFIGSLG). Residues 298–308 (SGISMRRFLKI) lie on the Cytoplasmic side of the membrane.

This sequence belongs to the ABC-4 integral membrane protein family. FtsX subfamily. Homodimer. Interacts with FtsE; forms a membrane-associated complex. Interacts (via large extracellular loop) with PcsB (via N-terminal coiled-coil domain). This interaction directs PcsB to equatorial and septal sites of dividing cells.

It localises to the cell membrane. Its function is as follows. Part of the ABC transporter FtsEX involved in asymmetric cellular division facilitating the initiation of sporulation. Required in maintaining normal growth and cellular morphology. The protein is Cell division protein FtsX of Streptococcus pneumoniae serotype 2 (strain D39 / NCTC 7466).